Consider the following 193-residue polypeptide: Cyanate hydratase (193 aa).

Active-site residues include Arg121, Glu124, and Ser147.

The protein belongs to the cyanase family.

It carries out the reaction cyanate + hydrogencarbonate + 3 H(+) = NH4(+) + 2 CO2. Its function is as follows. Catalyzes the reaction of cyanate with bicarbonate to produce ammonia and carbon dioxide. The sequence is that of Cyanate hydratase from Phaeodactylum tricornutum (strain CCAP 1055/1).